The chain runs to 456 residues: Tyrosine phenol-lyase (456 aa).

Residue K257 is modified to N6-(pyridoxal phosphate)lysine.

This sequence belongs to the beta-eliminating lyase family. In terms of assembly, homotetramer. The cofactor is pyridoxal 5'-phosphate. In terms of processing, contains L-DOPA (3',4'-dihydroxyphenylalanine).

It is found in the cytoplasm. The enzyme catalyses L-tyrosine + H2O = phenol + pyruvate + NH4(+). The protein is Tyrosine phenol-lyase (tpl) of Enterobacter agglomerans (Erwinia herbicola).